The primary structure comprises 619 residues: DNA mismatch repair protein MutL (619 aa).

Residues 368–378 show a composition bias toward basic and acidic residues; sequence VDEPKQVDEPK. A disordered region spans residues 368–403; it reads VDEPKQVDEPKQSSPVQEPKEEIPSFLPTVESKQND.

The protein belongs to the DNA mismatch repair MutL/HexB family.

In terms of biological role, this protein is involved in the repair of mismatches in DNA. It is required for dam-dependent methyl-directed DNA mismatch repair. May act as a 'molecular matchmaker', a protein that promotes the formation of a stable complex between two or more DNA-binding proteins in an ATP-dependent manner without itself being part of a final effector complex. The polypeptide is DNA mismatch repair protein MutL (Geobacillus sp. (strain WCH70)).